Consider the following 155-residue polypeptide: SsrA-binding protein (155 aa).

The interval 136–155 is disordered; sequence RESLKRRQDQRDMQRAMKNY.

It belongs to the SmpB family.

Its subcellular location is the cytoplasm. In terms of biological role, required for rescue of stalled ribosomes mediated by trans-translation. Binds to transfer-messenger RNA (tmRNA), required for stable association of tmRNA with ribosomes. tmRNA and SmpB together mimic tRNA shape, replacing the anticodon stem-loop with SmpB. tmRNA is encoded by the ssrA gene; the 2 termini fold to resemble tRNA(Ala) and it encodes a 'tag peptide', a short internal open reading frame. During trans-translation Ala-aminoacylated tmRNA acts like a tRNA, entering the A-site of stalled ribosomes, displacing the stalled mRNA. The ribosome then switches to translate the ORF on the tmRNA; the nascent peptide is terminated with the 'tag peptide' encoded by the tmRNA and targeted for degradation. The ribosome is freed to recommence translation, which seems to be the essential function of trans-translation. In Nostoc sp. (strain PCC 7120 / SAG 25.82 / UTEX 2576), this protein is SsrA-binding protein.